The chain runs to 171 residues: Ponticulin-like protein F (171 aa).

A signal peptide spans Met1 to Ser20. Gly149 carries GPI-like-anchor amidated glycine lipidation. A propeptide spans Thr150–Leu171 (removed in mature form).

The protein belongs to the ponticulin family. The GPI-like-anchor contains a phosphoceramide group, rather than a phosphatidyl group.

It is found in the cell membrane. In Dictyostelium discoideum (Social amoeba), this protein is Ponticulin-like protein F (ponF).